Reading from the N-terminus, the 799-residue chain is Serine/threonine-protein kinase AfsK (799 aa).

Residues 16–271 (FEVLGRLGAG…QAQLAPHLFG (256 aa)) enclose the Protein kinase domain. ATP-binding positions include 22-30 (LGAGGMGLV) and lysine 44. The residue at position 71 (serine 71) is a Phosphoserine; by autocatalysis. Aspartate 138 serves as the catalytic Proton acceptor. Threonine 168 carries the post-translational modification Phosphothreonine; by autocatalysis. Disordered stretches follow at residues 295–343 (RRNG…PAPP) and 393–426 (LAAS…PAGW). Composition is skewed to pro residues over residues 325–343 (HAPP…PAPP) and 411–421 (VPAPAPAPPEA).

The protein belongs to the protein kinase superfamily. Ser/Thr protein kinase family. As to quaternary structure, interacts (via the N-terminal kinase domain) with KbpA; the interaction prevents autophosphorylation of AfsK. Post-translationally, autophosphorylated mainly on threonine residues. Some phosphorylation on serine residues. Autophosphorylation on Thr-168 is the major site enhancing kinase activity towards AfsR, and is regulated though interaction with KbpA.

It carries out the reaction L-seryl-[protein] + ATP = O-phospho-L-seryl-[protein] + ADP + H(+). It catalyses the reaction L-threonyl-[protein] + ATP = O-phospho-L-threonyl-[protein] + ADP + H(+). Functionally, involved in the regulation of secondary metabolism by phosphorylating, on both Ser and Thr, the AfsR global regulatory protein involved in the control of secondary metabolism. This is Serine/threonine-protein kinase AfsK (afsK) from Streptomyces coelicolor (strain ATCC BAA-471 / A3(2) / M145).